A 538-amino-acid chain; its full sequence is tRNA-2-methylthio-N(6)-dimethylallyladenosine synthase (538 aa).

The tract at residues 1–23 is disordered; the sequence is MNEEQRLGRNGNTDAVSTKEAGS. The MTTase N-terminal domain maps to 95–213; sequence KKFLVRTYGC…LPHLLRNALF (119 aa). [4Fe-4S] cluster contacts are provided by Cys104, Cys140, Cys174, Cys250, Cys254, and Cys257. One can recognise a Radical SAM core domain in the interval 236–466; the sequence is REGKTQAWVN…NALVNDISAQ (231 aa). The TRAM domain occupies 469-532; it reads LEYQDKVVEV…TWSLNGEMVE (64 aa).

This sequence belongs to the methylthiotransferase family. MiaB subfamily. Monomer. [4Fe-4S] cluster is required as a cofactor.

It localises to the cytoplasm. The catalysed reaction is N(6)-dimethylallyladenosine(37) in tRNA + (sulfur carrier)-SH + AH2 + 2 S-adenosyl-L-methionine = 2-methylsulfanyl-N(6)-dimethylallyladenosine(37) in tRNA + (sulfur carrier)-H + 5'-deoxyadenosine + L-methionine + A + S-adenosyl-L-homocysteine + 2 H(+). Functionally, catalyzes the methylthiolation of N6-(dimethylallyl)adenosine (i(6)A), leading to the formation of 2-methylthio-N6-(dimethylallyl)adenosine (ms(2)i(6)A) at position 37 in tRNAs that read codons beginning with uridine. This Halalkalibacterium halodurans (strain ATCC BAA-125 / DSM 18197 / FERM 7344 / JCM 9153 / C-125) (Bacillus halodurans) protein is tRNA-2-methylthio-N(6)-dimethylallyladenosine synthase.